Reading from the N-terminus, the 165-residue chain is Nucleotide-binding protein PMM0481 (165 aa).

This sequence belongs to the YajQ family.

In terms of biological role, nucleotide-binding protein. This Prochlorococcus marinus subsp. pastoris (strain CCMP1986 / NIES-2087 / MED4) protein is Nucleotide-binding protein PMM0481.